We begin with the raw amino-acid sequence, 273 residues long: Outer surface protein A (273 aa).

Residues Met-1–Ala-16 form the signal peptide. A lipid anchor (N-palmitoyl cysteine) is attached at Cys-17. Cys-17 carries S-diacylglycerol cysteine lipidation.

Belongs to the OspA lipoprotein family.

The protein resides in the cell outer membrane. Its subcellular location is the cell surface. The protein is Outer surface protein A of Borreliella burgdorferi (strain N40) (Borrelia burgdorferi).